Consider the following 139-residue polypeptide: Holo-[acyl-carrier-protein] synthase (139 aa).

2 residues coordinate Mg(2+): Asp8 and Glu61.

This sequence belongs to the P-Pant transferase superfamily. AcpS family. It depends on Mg(2+) as a cofactor.

It localises to the cytoplasm. It catalyses the reaction apo-[ACP] + CoA = holo-[ACP] + adenosine 3',5'-bisphosphate + H(+). Transfers the 4'-phosphopantetheine moiety from coenzyme A to a Ser of acyl-carrier-protein. The protein is Holo-[acyl-carrier-protein] synthase of Bradyrhizobium diazoefficiens (strain JCM 10833 / BCRC 13528 / IAM 13628 / NBRC 14792 / USDA 110).